Here is a 92-residue protein sequence, read N- to C-terminus: Small ribosomal subunit protein bS20 (92 aa).

A disordered region spans residues 1 to 22 (MANSPQSKKRARQAEARAAVNK).

It belongs to the bacterial ribosomal protein bS20 family.

Binds directly to 16S ribosomal RNA. The polypeptide is Small ribosomal subunit protein bS20 (Cereibacter sphaeroides (strain ATCC 17029 / ATH 2.4.9) (Rhodobacter sphaeroides)).